The primary structure comprises 714 residues: A-kinase anchor protein 5 (714 aa).

Disordered regions lie at residues methionine 1 to arginine 146 and valine 243 to threonine 333. The essential to the intracellular anchoring function stretch occupies residues methionine 1–glutamate 164. 2 positions are modified to phosphoserine: serine 4 and serine 22. Over residues isoleucine 10–threonine 32 the composition is skewed to basic and acidic residues. Cysteine 36 carries S-palmitoyl cysteine lipidation. Residues phenylalanine 37 to alanine 50 are compositionally biased toward basic residues. 2 stretches are compositionally biased toward basic and acidic residues: residues threonine 54–proline 63 and lysine 88–glutamate 100. An AKAP CaM-binding motif is present at residues alanine 74–glutamate 94. Cysteine 123 is lipidated: S-palmitoyl cysteine. Residues valine 243–glutamine 268 show a composition bias toward polar residues. The segment covering glycine 285–glycine 301 has biased composition (basic and acidic residues). One copy of the 1; approximate repeat lies at leucine 305–serine 312. A 28 X 8 AA repeats of V-G-Q-A-E-E-A-T region spans residues leucine 305–valine 597. The span at glutamate 310–serine 323 shows a compositional bias: polar residues. The 2; approximate repeat unit spans residues leucine 322–threonine 329. Residues valine 330 to threonine 337 form a 3; approximate repeat. One copy of the 4; approximate repeat lies at leucine 350–threonine 357. A 5; approximate repeat occupies valine 358–valine 365. The stretch at leucine 366–lysine 373 is one 6; approximate repeat. One copy of the 7; approximate repeat lies at valine 398–isoleucine 405. The 8; approximate repeat unit spans residues methionine 414–threonine 421. 5 tandem repeats follow at residues valine 430–threonine 437, valine 438–threonine 445, valine 446–threonine 453, valine 454–threonine 461, and valine 462–threonine 469. A 14; approximate repeat occupies valine 470 to threonine 477. Residues valine 486 to isoleucine 493 form a 15; approximate repeat. Tandem repeats lie at residues valine 494 to threonine 501, valine 502 to threonine 509, valine 510 to threonine 517, and valine 518 to threonine 525. A 20; approximate repeat occupies valine 526 to threonine 533. Repeat unit 21 spans residues valine 534–threonine 541. The stretch at valine 542 to alanine 549 is one 22; approximate repeat. The 23; approximate repeat unit spans residues valine 550–isoleucine 557. A 24; approximate repeat occupies valine 558–threonine 565. Repeat unit 25 spans residues valine 566–threonine 573. A 26; approximate repeat occupies valine 574–threonine 581. One copy of the 27; approximate repeat lies at valine 582–isoleucine 589. Residues valine 590 to valine 597 form a 28; approximate repeat. An RII-beta subunit binding domain region spans residues tyrosine 675–glutamate 696. Positions glutamine 697 to glutamine 714 are tethers NFATC2 to CRAC channels.

As to quaternary structure, binding protein for dimer of the RII-beta regulatory subunit of cAMP-dependent protein kinase (PKA) and also for the protein kinase C (PKC) and the phosphatase calcineurin (PP2B). Each enzyme is inhibited when bound to the anchoring protein. Also binds the beta2-adrenergic receptor. Part of a complex containing AKAP5, ADCY5, ADCY6 and PDE4C. Interacts with ADCY8, and enhances its phosphorylation at lipid rafts. Interacts with ORAI1 (isoform alpha) (via N-terminus) upon store depletion and in response to LTC4. Does not interact with ORAI2 and ORAI3 paralogs. Interacts (via leucine zipper domain) with NFATC2/NFAT1. Interacts with calmodulin; the interaction is calcium-independent. Interacts with KCNQ2; the interaction may help KCNQ2 channel complex to retain calcium-bound calmodulin. Interacts with KCNK2; the channel is recruited to postsynaptic microdomains by AKAP5 where it can integrate neurotransmitter receptor signals. Part of a complex composed of AKAP5 and ADRB2. In terms of processing, palmitoylated. Palmitoylation at Cys-36 and Cys-123 plays a key role in the targeting of AKAP5 to lipid rafts. Palmitoylation by ZDHHC2 is required for AKAP5 function in LTP-stimulated recycling endosome exocytosis.

It is found in the postsynaptic recycling endosome membrane. The protein localises to the cell projection. The protein resides in the dendrite. Its subcellular location is the postsynaptic cell membrane. Functionally, multivalent scaffold protein that anchors the cAMP-dependent protein kinase/PKA to cytoskeletal and/or organelle-associated proteins, targeting the signal carried by cAMP to specific intracellular effectors. Association with the beta2-adrenergic receptor (beta2-AR) not only regulates beta2-AR signaling pathway, but also the activation by PKA by switching off the beta2-AR signaling cascade. Plays a role in long term synaptic potentiation by regulating protein trafficking from the dendritic recycling endosomes to the plasma membrane and controlling both structural and functional plasticity at excitatory synapses. In hippocampal pyramidal neurons, recruits KCNK2/TREK-1 channel at postsynaptic dense bodies microdomains and converts it to a leak channel no longer sensitive to stimulation by arachidonic acid, acidic pH or mechanical stress, nor inhibited by Gq-coupled receptors but still under the negative control of Gs-coupled receptors. Associates with ORAI1 pore-forming subunit of CRAC channels in Ca(2+) signaling microdomains where it recruits NFATC2/NFAT1 and couples store-operated Ca(2+) influx to calmodulin and calcineurin signaling and activation of NFAT-dependent transcriptional responses. The polypeptide is A-kinase anchor protein 5 (Akap5) (Rattus norvegicus (Rat)).